Reading from the N-terminus, the 310-residue chain is p-hydroxybenzoic acid efflux pump subunit AaeA (310 aa).

The chain crosses the membrane as a helical span at residues 12-32 (AITVVLVILAFIAIFNAWVYY).

It belongs to the membrane fusion protein (MFP) (TC 8.A.1) family.

Its subcellular location is the cell inner membrane. Functionally, forms an efflux pump with AaeB. This chain is p-hydroxybenzoic acid efflux pump subunit AaeA, found in Escherichia coli O7:K1 (strain IAI39 / ExPEC).